The primary structure comprises 129 residues: Small ribosomal subunit protein uS11 (129 aa).

Belongs to the universal ribosomal protein uS11 family. In terms of assembly, part of the 30S ribosomal subunit. Interacts with proteins S7 and S18. Binds to IF-3.

Functionally, located on the platform of the 30S subunit, it bridges several disparate RNA helices of the 16S rRNA. Forms part of the Shine-Dalgarno cleft in the 70S ribosome. This is Small ribosomal subunit protein uS11 from Allorhizobium ampelinum (strain ATCC BAA-846 / DSM 112012 / S4) (Agrobacterium vitis (strain S4)).